A 585-amino-acid polypeptide reads, in one-letter code: Proline--tRNA ligase (585 aa).

Belongs to the class-II aminoacyl-tRNA synthetase family. ProS type 1 subfamily. In terms of assembly, homodimer.

It localises to the cytoplasm. The enzyme catalyses tRNA(Pro) + L-proline + ATP = L-prolyl-tRNA(Pro) + AMP + diphosphate. Its function is as follows. Catalyzes the attachment of proline to tRNA(Pro) in a two-step reaction: proline is first activated by ATP to form Pro-AMP and then transferred to the acceptor end of tRNA(Pro). As ProRS can inadvertently accommodate and process non-cognate amino acids such as alanine and cysteine, to avoid such errors it has two additional distinct editing activities against alanine. One activity is designated as 'pretransfer' editing and involves the tRNA(Pro)-independent hydrolysis of activated Ala-AMP. The other activity is designated 'posttransfer' editing and involves deacylation of mischarged Ala-tRNA(Pro). The misacylated Cys-tRNA(Pro) is not edited by ProRS. The sequence is that of Proline--tRNA ligase from Cutibacterium acnes (strain DSM 16379 / KPA171202) (Propionibacterium acnes).